The primary structure comprises 437 residues: UDP-N-acetylmuramoylalanine--D-glutamate ligase (437 aa).

112 to 118 (GSNGKST) lines the ATP pocket.

Belongs to the MurCDEF family.

It is found in the cytoplasm. It catalyses the reaction UDP-N-acetyl-alpha-D-muramoyl-L-alanine + D-glutamate + ATP = UDP-N-acetyl-alpha-D-muramoyl-L-alanyl-D-glutamate + ADP + phosphate + H(+). It functions in the pathway cell wall biogenesis; peptidoglycan biosynthesis. Functionally, cell wall formation. Catalyzes the addition of glutamate to the nucleotide precursor UDP-N-acetylmuramoyl-L-alanine (UMA). The protein is UDP-N-acetylmuramoylalanine--D-glutamate ligase of Haemophilus influenzae (strain PittGG).